The sequence spans 391 residues: uncharacterized protein (391 aa).

The HTH arsR-type domain maps to 235–330 (VFILSRINLL…LYLKNETQKS (96 aa)).

This is an uncharacterized protein from Methanocaldococcus jannaschii (strain ATCC 43067 / DSM 2661 / JAL-1 / JCM 10045 / NBRC 100440) (Methanococcus jannaschii).